The sequence spans 813 residues: Calpain-7 (813 aa).

At Met1 the chain carries N-acetylmethionine. Residue Thr95 is modified to Phosphothreonine. The 309-residue stretch at 232-540 (RERFAYPMPF…YDVIYLSWNP (309 aa)) folds into the Calpain catalytic domain. Residues Cys290, His458, and Asn478 contribute to the active site. Positions 541-701 (GLFKESTCIH…INGKWSGQSA (161 aa)) are domain III. The segment at 702 to 813 (GGCGNFQETH…IIPIKITQLQ (112 aa)) is domain N.

Belongs to the peptidase C2 family. As to expression, ubiquitous.

Its subcellular location is the nucleus. In terms of biological role, calcium-regulated non-lysosomal thiol-protease. This Homo sapiens (Human) protein is Calpain-7 (CAPN7).